We begin with the raw amino-acid sequence, 268 residues long: Aliphatic sulfonates import ATP-binding protein SsuB 2 (268 aa).

Residues 15 to 236 (LAVRKLQKTF…VRGSHRLAAL (222 aa)) form the ABC transporter domain. 47–54 (GRSGCGKS) contributes to the ATP binding site.

Belongs to the ABC transporter superfamily. Aliphatic sulfonates importer (TC 3.A.1.17.2) family. In terms of assembly, the complex is composed of two ATP-binding proteins (SsuB), two transmembrane proteins (SsuC) and a solute-binding protein (SsuA).

It localises to the cell inner membrane. The catalysed reaction is ATP + H2O + aliphatic sulfonate-[sulfonate-binding protein]Side 1 = ADP + phosphate + aliphatic sulfonateSide 2 + [sulfonate-binding protein]Side 1.. In terms of biological role, part of the ABC transporter complex SsuABC involved in aliphatic sulfonates import. Responsible for energy coupling to the transport system. The sequence is that of Aliphatic sulfonates import ATP-binding protein SsuB 2 from Pseudomonas fluorescens (strain ATCC BAA-477 / NRRL B-23932 / Pf-5).